The sequence spans 266 residues: Gap junction beta-4 protein (266 aa).

Residues Asn2 to Val13 lie within the membrane without spanning it. The Cytoplasmic segment spans residues Asn14 to Leu20. Residues Gly21–Ala40 traverse the membrane as a helical segment. Over Glu41–His73 the chain is Extracellular. 3 cysteine pairs are disulfide-bonded: Cys53–Cys175, Cys60–Cys169, and Cys64–Cys164. The helical transmembrane segment at Val74–His94 threads the bilayer. Topologically, residues Val95–Thr130 are cytoplasmic. A helical membrane pass occupies residues Tyr131–Cys151. Topologically, residues Ile152–Lys184 are extracellular. The chain crosses the membrane as a helical span at residues Val185–Val205. Residues Val206–Pro266 lie on the Cytoplasmic side of the membrane.

The protein belongs to the connexin family. Beta-type (group I) subfamily. A hemichannel or connexon is composed of a hexamer of connexins. A functional gap junction is formed by the apposition of two hemichannels. Forms heteromeric channels with GJB2. Detected in cochlea (at protein level). Detected in cochlea. Expressed in skin.

Its subcellular location is the cell membrane. It localises to the cell junction. The protein resides in the gap junction. Its function is as follows. Structural component of gap junctions. Gap junctions are dodecameric channels that connect the cytoplasm of adjoining cells. They are formed by the docking of two hexameric hemichannels, one from each cell membrane. Small molecules and ions diffuse from one cell to a neighboring cell via the central pore. In Mus musculus (Mouse), this protein is Gap junction beta-4 protein (Gjb4).